The primary structure comprises 554 residues: Movement protein Hsp70h (554 aa).

This sequence belongs to the heat shock protein 70 family.

It localises to the virion. Functionally, transports viral genome to neighboring plant cells directly through plasmosdesmata, without any budding. The movement protein allows efficient cell to cell propagation, by bypassing the host cell wall barrier. Two movement proteins, p6, Hsp70h and three structural proteins, CP, CPm, and P64 are essential for cell-cell movement. Also plays a role in virion formation. Together with CPm and p64, encapsidates the 5'-terminal portion of the viral genome. The sequence is that of Movement protein Hsp70h from Lettuce infectious yellows virus (isolate United States/92) (LIYV).